Reading from the N-terminus, the 538-residue chain is Phosphoenolpyruvate carboxykinase (ATP) (538 aa).

Arg64 serves as a coordination point for substrate. Arg152 contacts ATP. The substrate site is built by Tyr205 and Lys211. ATP contacts are provided by residues Lys211, His230, and 246–254; that span reads GLSGTGKTT. 2 residues coordinate Mn(2+): Lys211 and His230. Asp267 contributes to the Mn(2+) binding site. ATP contacts are provided by residues Glu295, Arg331, Arg344, 447 to 448, and Thr453; that span reads RI. Arg331 is a binding site for substrate.

Belongs to the phosphoenolpyruvate carboxykinase (ATP) family. Monomer. It depends on Mn(2+) as a cofactor.

It is found in the cytoplasm. It carries out the reaction oxaloacetate + ATP = phosphoenolpyruvate + ADP + CO2. The protein operates within carbohydrate biosynthesis; gluconeogenesis. Its function is as follows. Involved in gluconeogenesis. Catalyzes the conversion of oxaloacetate (OAA) to phosphoenolpyruvate (PEP) through direct phosphoryl transfer between the nucleoside triphosphate and OAA. The sequence is that of Phosphoenolpyruvate carboxykinase (ATP) from Actinobacillus succinogenes (strain ATCC 55618 / DSM 22257 / CCUG 43843 / 130Z).